The following is a 148-amino-acid chain: Deoxyuridine 5'-triphosphate nucleotidohydrolase (148 aa).

Substrate contacts are provided by residues 67–69, Asn-80, 84–86, and Met-94; these read RSG and LID.

This sequence belongs to the dUTPase family. It depends on Mg(2+) as a cofactor.

It catalyses the reaction dUTP + H2O = dUMP + diphosphate + H(+). The protein operates within pyrimidine metabolism; dUMP biosynthesis; dUMP from dCTP (dUTP route): step 2/2. In terms of biological role, this enzyme is involved in nucleotide metabolism: it produces dUMP, the immediate precursor of thymidine nucleotides and it decreases the intracellular concentration of dUTP so that uracil cannot be incorporated into DNA. The polypeptide is Deoxyuridine 5'-triphosphate nucleotidohydrolase (Francisella tularensis subsp. holarctica (strain FTNF002-00 / FTA)).